A 523-amino-acid chain; its full sequence is Cytoplasmic dynein 1 light intermediate chain 1 (523 aa).

The segment at 1–25 is disordered; it reads MAAVGRVGSFGSSPPGLSSTYTGGP. Residues 9–19 are compositionally biased toward low complexity; the sequence is SFGSSPPGLSS. Residue 74–81 coordinates ATP; the sequence is GEDGAGKT. A Phosphoserine modification is found at Ser-207. Residue Thr-213 is modified to Phosphothreonine. 2 disordered regions span residues 387–434 and 456–523; these read PPTA…DPNM and TGSP…GEAS. Phosphoserine occurs at positions 398 and 405. Residue Thr-408 is modified to Phosphothreonine. Residues Ser-412, Ser-419, Ser-421, and Ser-427 each carry the phosphoserine modification. The segment covering 412–421 has biased composition (low complexity); that stretch reads SVSSNVASVS. Residues 458 to 478 show a composition bias toward gly residues; sequence SPGGPGVSGGSPAGGAGGGSS. The residue at position 487 (Ser-487) is a Phosphoserine. Positions 493–503 are enriched in basic and acidic residues; the sequence is LDVHAELDRIT. The segment covering 506-523 has biased composition (low complexity); the sequence is PVTVSPTTPTSPTEGEAS. The residue at position 510 (Ser-510) is a Phosphoserine. Residues Thr-512, Thr-513, and Thr-515 each carry the phosphothreonine modification. Ser-516 is modified (phosphoserine).

It belongs to the dynein light intermediate chain family. As to quaternary structure, homodimer. The cytoplasmic dynein 1 complex consists of two catalytic heavy chains (HCs) and a number of non-catalytic subunits presented by intermediate chains (ICs), light intermediate chains (LICs) and light chains (LCs); the composition seems to vary in respect to the IC, LIC and LC composition. The heavy chain homodimer serves as a scaffold for the probable homodimeric assembly of the respective non-catalytic subunits. The ICs and LICs bind directly to the HC dimer and the LCs assemble on the IC dimer. Self-associates. Interacts with DYNC1H1; DYNC1LI1 and DYNC1LI2 bind mutually exclusive to DYNC1H1. Interacts with PCNT. Forms a complex with RAB11FIP3 and RAB11A1; the interaction between DYNC1LI1 and RAB11FIP3 is direct and induces DYNC1LI1 localization onto endosomal membrane; the complex regulates endocytic trafficking. Interacts with RUFY3. In terms of assembly, (Microbial infection) Interacts with human adenovirus 5 hexon protein; this interaction probably allows virus intracellular transport. Phosphorylated during mitosis but not in interphase.

It is found in the cytoplasm. The protein localises to the chromosome. The protein resides in the centromere. Its subcellular location is the kinetochore. It localises to the cytoskeleton. It is found in the spindle pole. The protein localises to the recycling endosome membrane. Functionally, acts as one of several non-catalytic accessory components of the cytoplasmic dynein 1 complex that are thought to be involved in linking dynein to cargos and to adapter proteins that regulate dynein function. Cytoplasmic dynein 1 acts as a motor for the intracellular retrograde motility of vesicles and organelles along microtubules. May play a role in binding dynein to membranous organelles or chromosomes. Probably involved in the microtubule-dependent transport of pericentrin. Is required for progress through the spindle assembly checkpoint. The phosphorylated form appears to be involved in the selective removal of MAD1L1 and MAD1L2 but not BUB1B from kinetochores. Forms a functional Rab11/RAB11FIP3/dynein complex onto endosomal membrane that regulates the movement of peripheral sorting endosomes (SE) along microtubule tracks toward the microtubule organizing center/centrosome, generating the endosomal recycling compartment (ERC). This Homo sapiens (Human) protein is Cytoplasmic dynein 1 light intermediate chain 1 (DYNC1LI1).